Reading from the N-terminus, the 569-residue chain is Hexose transporter HXT8 (569 aa).

The tract at residues 1–38 is disordered; the sequence is MTDRKTNLPEEPIFEEAEDDGCPSIENSSHLSVPTVEE. At 1–61 the chain is on the cytoplasmic side; sequence MTDRKTNLPE…EVVVPEKPAS (61 aa). A compositionally biased stretch (acidic residues) spans 12–21; it reads PIFEEAEDDG. Residues 62 to 82 form a helical membrane-spanning segment; the sequence is AYATVSIMCLCMAFGGFMSGW. Over 83–118 the chain is Extracellular; the sequence is DTGTISGFVNQTDFLRRFGNYSHSKNTYYLSNVRTG. N-linked (GlcNAc...) asparagine glycosylation is found at Asn-92 and Asn-102. The chain crosses the membrane as a helical span at residues 119 to 139; sequence LIVSIFNVGSAIGCLFLSKLG. Residues 140–145 are Cytoplasmic-facing; sequence DIYGRC. The helical transmembrane segment at 146-166 threads the bilayer; it reads MGLIIVIVVYMVGIVIQIASI. Residues 167–176 lie on the Extracellular side of the membrane; that stretch reads DKWYQYFIGR. The helical transmembrane segment at 177 to 197 threads the bilayer; the sequence is IIAGIGAGSISVLAPMLISET. The Cytoplasmic portion of the chain corresponds to 198 to 203; that stretch reads APKHIR. Residues 204 to 224 form a helical membrane-spanning segment; that stretch reads GTLLACWQLMVTFAIFLGYCT. Topologically, residues 225–238 are extracellular; it reads NYGTKTYSNSVQWR. A helical membrane pass occupies residues 239–259; the sequence is VPLGLCFAWAIIMIGGMTFVP. The Cytoplasmic segment spans residues 260-342; sequence ESPRFLVQVG…INSLQQLTGD (83 aa). Residues 343–359 form a helical membrane-spanning segment; that stretch reads NYFFYYGTTIFKSVGMN. Topologically, residues 360 to 365 are extracellular; that stretch reads DSFETS. Residues 366 to 383 traverse the membrane as a helical segment; sequence IVLGIVNFASCFFSLYSV. Over 384–390 the chain is Cytoplasmic; that stretch reads DKLGRRR. The chain crosses the membrane as a helical span at residues 391 to 411; it reads CLLLGAATMTACMVIYASVGV. Over 412-433 the chain is Extracellular; that stretch reads TRLYPNGKSEPSSKGAGNCTIV. Residue Asn-429 is glycosylated (N-linked (GlcNAc...) asparagine). Residues 434–454 traverse the membrane as a helical segment; that stretch reads FTCFYIFCFSCTWGPVCYVII. Topologically, residues 455–471 are cytoplasmic; that stretch reads SETFPLRVRSKCMSVAT. The chain crosses the membrane as a helical span at residues 472–492; sequence AANLLWGFLIGFFTPFITSAI. A topological domain (extracellular) is located at residue Asn-493. A helical transmembrane segment spans residues 494–514; the sequence is FYYGYVFMGCLAFSYFYVFFF. The Cytoplasmic segment spans residues 515–569; that stretch reads VPETKGLTLEEVDEMWMDGVLPWKSESWVPASRRDGDYDNEKLQHDEKPFYKRMF.

This sequence belongs to the major facilitator superfamily. Sugar transporter (TC 2.A.1.1) family.

Its subcellular location is the membrane. Functionally, probable glucose transporter. This Saccharomyces cerevisiae (strain ATCC 204508 / S288c) (Baker's yeast) protein is Hexose transporter HXT8 (HXT8).